A 274-amino-acid polypeptide reads, in one-letter code: UPF0173 metal-dependent hydrolase AnaeK_1127 (274 aa).

Belongs to the UPF0173 family.

In Anaeromyxobacter sp. (strain K), this protein is UPF0173 metal-dependent hydrolase AnaeK_1127.